Reading from the N-terminus, the 317-residue chain is MRDIAVFSGSAHPDLAEEVCAQLGVPLSPTRVSRFANDCLEVQLMANCRERDVFLVQPLVTPVQEHLVELLMMCDAARGASAGRITVVMPHYSYARSDKKDAPRISLGGRLVADLLVAAGASRVLAMTLHSPQVHGFFSVPVDHLHALRELAAHFRQYDLSRATVVSPDLGNAKEAAAFARMLGAQVAAGAKQRYADDRVSISSVIGDVAGRDVIVLDDEIAKGSTVLELLDRLRESGPRTIRLACTHGLFAAGALGRLSEQPDVLEIVCTNTVPVPADDHTDKLRILSIAPALAEAVRRIHNGESVSALFDARPAG.

The interval 211–224 (GRDVIVLDDEIAKG) is binding of phosphoribosylpyrophosphate.

The protein belongs to the ribose-phosphate pyrophosphokinase family.

It carries out the reaction D-ribose 5-phosphate + ATP = 5-phospho-alpha-D-ribose 1-diphosphate + AMP + H(+). This chain is Putative ribose-phosphate pyrophosphokinase, found in Streptomyces coelicolor (strain ATCC BAA-471 / A3(2) / M145).